The chain runs to 259 residues: MGIFDGKVAIITGGGKAKSIGYGIAVAYAKEGANLVLTGRNEQKLLDAKEELERLYGIKVLPLAVDVTPSDESEDRVKEAVQKVIAEFGRIDVLINNAQASASGIPLSMQTKDHFDLGIYSGLYATFYYMRECYPYLKETQGSVINFASGAGLFGNVGQCSYAAAKEGIRGLSRVAATEWGKDNINVNVVCPLAMTAQLENFKLSYPEAYEKNLRGVPMGRFGDPELDIGRVCVQLGSPDFKYMSGETLTLEGGMGQRP.

Tyrosine 162 functions as the Proton acceptor in the catalytic mechanism.

This sequence belongs to the short-chain dehydrogenases/reductases (SDR) family. In terms of assembly, homotetramer.

The catalysed reaction is cholate + NADP(+) = 3alpha,7alpha-dihydroxy-12-oxo-5beta-cholanate + NADPH + H(+). It carries out the reaction deoxycholate + NADP(+) = 12-dehydrodeoxycholate + NADPH + H(+). Its function is as follows. Catalyzes the oxidation of the 12alpha-hydroxy group of bile acids, like cholate and deoxycholate. Is also able to catalyze the reverse reaction in vitro. Is likely involved in an epimerization pathway of bile acids that converts hydroxy groups from alpha to beta positions via stable oxo-intermediates, which occurs in the human gut. The polypeptide is 12alpha-hydroxysteroid dehydrogenase (Clostridium sp. (strain ATCC 29733 / VPI C48-50)).